The primary structure comprises 221 residues: 7-cyano-7-deazaguanine synthase (221 aa).

ATP is bound at residue 12–22; sequence FSGGQDSTTCL. 4 residues coordinate Zn(2+): cysteine 190, cysteine 199, cysteine 202, and cysteine 205.

Belongs to the QueC family. In terms of assembly, homodimer. Requires Zn(2+) as cofactor.

The enzyme catalyses 7-carboxy-7-deazaguanine + NH4(+) + ATP = 7-cyano-7-deazaguanine + ADP + phosphate + H2O + H(+). It functions in the pathway purine metabolism; 7-cyano-7-deazaguanine biosynthesis. Functionally, catalyzes the ATP-dependent conversion of 7-carboxy-7-deazaguanine (CDG) to 7-cyano-7-deazaguanine (preQ(0)). The protein is 7-cyano-7-deazaguanine synthase of Clostridium novyi (strain NT).